The primary structure comprises 177 residues: Thymidine kinase (177 aa).

11-18 (GPMFSGKS) lines the ATP pocket. The Proton acceptor role is filled by Glu-83. Residue Phe-113 coordinates substrate. 2 residues coordinate Zn(2+): Cys-138 and Cys-141. Position 157 to 161 (157 to 161 (IEIIG)) interacts with substrate. Zn(2+) contacts are provided by Cys-170 and Cys-173.

This sequence belongs to the thymidine kinase family. As to quaternary structure, homotetramer. Two molecules of substrate bind to each enzyme tetramer.

It carries out the reaction thymidine + ATP = dTMP + ADP + H(+). In terms of biological role, phosphorylates thymidine and thymidine analogs, such as azidothymidine (AZT). Part of the salvage pathway for pyrimidine deoxyribonucleotide synthesis. The protein is Thymidine kinase (OPG101) of Variola virus.